Consider the following 485-residue polypeptide: Ribulose bisphosphate carboxylase large chain (485 aa).

Substrate is bound by residues Asn-124 and Thr-174. Residue Lys-176 is the Proton acceptor of the active site. Lys-178 contributes to the substrate binding site. Mg(2+)-binding residues include Lys-202, Asp-204, and Glu-205. Lys-202 carries the N6-carboxylysine modification. His-294 functions as the Proton acceptor in the catalytic mechanism. The substrate site is built by Arg-295, His-327, and Ser-379.

Belongs to the RuBisCO large chain family. Type I subfamily. As to quaternary structure, heterohexadecamer of 8 large chains and 8 small chains. Mg(2+) serves as cofactor.

The catalysed reaction is 2 (2R)-3-phosphoglycerate + 2 H(+) = D-ribulose 1,5-bisphosphate + CO2 + H2O. The enzyme catalyses D-ribulose 1,5-bisphosphate + O2 = 2-phosphoglycolate + (2R)-3-phosphoglycerate + 2 H(+). Functionally, ruBisCO catalyzes two reactions: the carboxylation of D-ribulose 1,5-bisphosphate, the primary event in carbon dioxide fixation, as well as the oxidative fragmentation of the pentose substrate in the photorespiration process. Both reactions occur simultaneously and in competition at the same active site. The chain is Ribulose bisphosphate carboxylase large chain from Rhodopseudomonas palustris (strain BisB18).